A 460-amino-acid chain; its full sequence is UDP-glucuronate 4-epimerase 6 (460 aa).

2 helical membrane-spanning segments follow: residues 41–61 (ATLL…PPLS) and 111–131 (GLSV…SLAL). 113–144 (SVLVTGAAGFVGSHCSLALRKRGDGVLGFDNF) is a binding site for NAD(+). The Proton acceptor role is filled by Tyr-263.

The protein belongs to the NAD(P)-dependent epimerase/dehydratase family. Homodimer. In terms of tissue distribution, in roots, leaf veins, siliques, flowers, pollen and stems.

The protein resides in the golgi apparatus. It is found in the golgi stack membrane. It carries out the reaction UDP-alpha-D-glucuronate = UDP-alpha-D-galacturonate. In terms of biological role, involved in the synthesis of the negatively charged monosaccharide that forms the backbone of pectic cell wall components. The protein is UDP-glucuronate 4-epimerase 6 (GAE6) of Arabidopsis thaliana (Mouse-ear cress).